The following is an 817-amino-acid chain: Phosphoenolpyruvate synthase (817 aa).

H442 (tele-phosphohistidine intermediate) is an active-site residue. Substrate contacts are provided by R540, R587, E684, G706, T707, N708, and D709. E684 contributes to the Mg(2+) binding site. D709 is a binding site for Mg(2+). The active-site Proton donor is the C756.

The protein belongs to the PEP-utilizing enzyme family. As to quaternary structure, homooctamer. Mg(2+) is required as a cofactor.

The enzyme catalyses pyruvate + ATP + H2O = phosphoenolpyruvate + AMP + phosphate + 2 H(+). The protein operates within carbohydrate biosynthesis; gluconeogenesis. Functionally, catalyzes the phosphorylation of pyruvate to phosphoenolpyruvate. This chain is Phosphoenolpyruvate synthase (ppsA), found in Pyrococcus furiosus (strain ATCC 43587 / DSM 3638 / JCM 8422 / Vc1).